The sequence spans 149 residues: D-aminoacyl-tRNA deacylase (149 aa).

A Gly-cisPro motif, important for rejection of L-amino acids motif is present at residues 137 to 138 (GP).

Belongs to the DTD family. Homodimer.

The protein resides in the cytoplasm. It carries out the reaction glycyl-tRNA(Ala) + H2O = tRNA(Ala) + glycine + H(+). The enzyme catalyses a D-aminoacyl-tRNA + H2O = a tRNA + a D-alpha-amino acid + H(+). In terms of biological role, an aminoacyl-tRNA editing enzyme that deacylates mischarged D-aminoacyl-tRNAs. Also deacylates mischarged glycyl-tRNA(Ala), protecting cells against glycine mischarging by AlaRS. Acts via tRNA-based rather than protein-based catalysis; rejects L-amino acids rather than detecting D-amino acids in the active site. By recycling D-aminoacyl-tRNA to D-amino acids and free tRNA molecules, this enzyme counteracts the toxicity associated with the formation of D-aminoacyl-tRNA entities in vivo and helps enforce protein L-homochirality. The polypeptide is D-aminoacyl-tRNA deacylase (Thermosipho africanus (strain TCF52B)).